Here is a 379-residue protein sequence, read N- to C-terminus: UDP-4-amino-4-deoxy-L-arabinose--oxoglutarate aminotransferase (379 aa).

Position 182 is an N6-(pyridoxal phosphate)lysine (Lys182).

Belongs to the DegT/DnrJ/EryC1 family. ArnB subfamily. As to quaternary structure, homodimer. It depends on pyridoxal 5'-phosphate as a cofactor.

It carries out the reaction UDP-4-amino-4-deoxy-beta-L-arabinose + 2-oxoglutarate = UDP-beta-L-threo-pentopyranos-4-ulose + L-glutamate. It functions in the pathway nucleotide-sugar biosynthesis; UDP-4-deoxy-4-formamido-beta-L-arabinose biosynthesis; UDP-4-deoxy-4-formamido-beta-L-arabinose from UDP-alpha-D-glucuronate: step 2/3. It participates in bacterial outer membrane biogenesis; lipopolysaccharide biosynthesis. Functionally, catalyzes the conversion of UDP-4-keto-arabinose (UDP-Ara4O) to UDP-4-amino-4-deoxy-L-arabinose (UDP-L-Ara4N). The modified arabinose is attached to lipid A and is required for resistance to polymyxin and cationic antimicrobial peptides. This is UDP-4-amino-4-deoxy-L-arabinose--oxoglutarate aminotransferase from Escherichia coli O8 (strain IAI1).